The chain runs to 338 residues: 5-dehydro-2-deoxygluconokinase (338 aa).

It belongs to the carbohydrate kinase PfkB family.

It carries out the reaction 5-dehydro-2-deoxy-D-gluconate + ATP = 6-phospho-5-dehydro-2-deoxy-D-gluconate + ADP + H(+). The protein operates within polyol metabolism; myo-inositol degradation into acetyl-CoA; acetyl-CoA from myo-inositol: step 5/7. Its function is as follows. Catalyzes the phosphorylation of 5-dehydro-2-deoxy-D-gluconate (2-deoxy-5-keto-D-gluconate or DKG) to 6-phospho-5-dehydro-2-deoxy-D-gluconate (DKGP). This Mesomycoplasma hyopneumoniae (strain 7448) (Mycoplasma hyopneumoniae) protein is 5-dehydro-2-deoxygluconokinase.